The chain runs to 856 residues: Glucans biosynthesis glucosyltransferase H (856 aa).

Helical transmembrane passes span Ile-144–Met-164, Ile-198–Met-218, Val-517–Leu-537, Leu-574–Trp-594, Thr-608–Phe-628, and Phe-684–Ile-704.

The protein belongs to the glycosyltransferase 2 family. OpgH subfamily.

The protein localises to the cell inner membrane. It participates in glycan metabolism; osmoregulated periplasmic glucan (OPG) biosynthesis. In terms of biological role, involved in the biosynthesis of osmoregulated periplasmic glucans (OPGs). This is Glucans biosynthesis glucosyltransferase H from Pseudomonas fluorescens (strain ATCC BAA-477 / NRRL B-23932 / Pf-5).